We begin with the raw amino-acid sequence, 139 residues long: D-ribose pyranase (139 aa).

H20 (proton donor) is an active-site residue. Substrate is bound by residues D28, H106, and 128-130 (YAN).

It belongs to the RbsD / FucU family. RbsD subfamily. Homodecamer.

The protein resides in the cytoplasm. It carries out the reaction beta-D-ribopyranose = beta-D-ribofuranose. The protein operates within carbohydrate metabolism; D-ribose degradation; D-ribose 5-phosphate from beta-D-ribopyranose: step 1/2. In terms of biological role, catalyzes the interconversion of beta-pyran and beta-furan forms of D-ribose. This Haemophilus influenzae (strain 86-028NP) protein is D-ribose pyranase.